A 241-amino-acid chain; its full sequence is Leucyl/phenylalanyl-tRNA--protein transferase (241 aa).

Belongs to the L/F-transferase family.

The protein resides in the cytoplasm. The catalysed reaction is N-terminal L-lysyl-[protein] + L-leucyl-tRNA(Leu) = N-terminal L-leucyl-L-lysyl-[protein] + tRNA(Leu) + H(+). It carries out the reaction N-terminal L-arginyl-[protein] + L-leucyl-tRNA(Leu) = N-terminal L-leucyl-L-arginyl-[protein] + tRNA(Leu) + H(+). It catalyses the reaction L-phenylalanyl-tRNA(Phe) + an N-terminal L-alpha-aminoacyl-[protein] = an N-terminal L-phenylalanyl-L-alpha-aminoacyl-[protein] + tRNA(Phe). Functions in the N-end rule pathway of protein degradation where it conjugates Leu, Phe and, less efficiently, Met from aminoacyl-tRNAs to the N-termini of proteins containing an N-terminal arginine or lysine. In Neisseria meningitidis serogroup A / serotype 4A (strain DSM 15465 / Z2491), this protein is Leucyl/phenylalanyl-tRNA--protein transferase.